The following is a 323-amino-acid chain: Beta-ketoacyl-[acyl-carrier-protein] synthase III (323 aa).

Residues cysteine 114 and histidine 250 contribute to the active site. An ACP-binding region spans residues 251–255; the sequence is QANIR. Asparagine 280 is a catalytic residue.

It belongs to the thiolase-like superfamily. FabH family. Homodimer.

The protein localises to the cytoplasm. The enzyme catalyses malonyl-[ACP] + acetyl-CoA + H(+) = 3-oxobutanoyl-[ACP] + CO2 + CoA. It participates in lipid metabolism; fatty acid biosynthesis. In terms of biological role, catalyzes the condensation reaction of fatty acid synthesis by the addition to an acyl acceptor of two carbons from malonyl-ACP. Catalyzes the first condensation reaction which initiates fatty acid synthesis and may therefore play a role in governing the total rate of fatty acid production. Possesses both acetoacetyl-ACP synthase and acetyl transacylase activities. Its substrate specificity determines the biosynthesis of branched-chain and/or straight-chain of fatty acids. This Alkalilimnicola ehrlichii (strain ATCC BAA-1101 / DSM 17681 / MLHE-1) protein is Beta-ketoacyl-[acyl-carrier-protein] synthase III.